Reading from the N-terminus, the 298-residue chain is Protein REVEILLE 8 (298 aa).

The segment at 1-44 (MSSSPSRNPTNAEAPPPPPTSTDAVAEGSSKKVRKPYTITKSRE) is disordered. The HTH myb-type domain occupies 38–92 (TITKSRESWTEEEHDKFLEALQLFDRDWKKIEDFVGSKTVIQIRSHAQKYFLKVQ). A DNA-binding region (H-T-H motif) is located at residues 65–88 (WKKIEDFVGSKTVIQIRSHAQKYF). Positions 96–123 (TLAHVPPPRPKRKAAHPYPQKASKNAQM) are disordered.

It localises to the nucleus. Its function is as follows. Transcriptional activator of evening element (EE)-containing clock-controlled genes. Forms a negative feedback loop with APRR5. Regulates the pattern of histone H3 acetylation of the TOC1 promoter. RVE4, RVE6 and RVE8 are components of the circadian system acting synergistically to regulate flowering time, redundantly to regulate leaf growth, and antagonistically to regulate hypocotyl elongation; their action seems independent of ZTL and HY5. The polypeptide is Protein REVEILLE 8 (Arabidopsis thaliana (Mouse-ear cress)).